The following is a 311-amino-acid chain: Haloalkane dehalogenase (311 aa).

An AB hydrolase-1 domain is found at 30 to 148 (AIVFQHGNPS…WDDFPDEVAQ (119 aa)). The Nucleophile role is filled by D107. E131 serves as the catalytic Proton donor. Catalysis depends on H272, which acts as the Proton acceptor.

The protein belongs to the haloalkane dehalogenase family. Type 2 subfamily. As to quaternary structure, monomer.

The enzyme catalyses 1-haloalkane + H2O = a halide anion + a primary alcohol + H(+). Functionally, catalyzes hydrolytic cleavage of carbon-halogen bonds in halogenated aliphatic compounds, leading to the formation of the corresponding primary alcohols, halide ions and protons. In Mycolicibacterium smegmatis (strain ATCC 700084 / mc(2)155) (Mycobacterium smegmatis), this protein is Haloalkane dehalogenase.